Reading from the N-terminus, the 229-residue chain is Leucyl/phenylalanyl-tRNA--protein transferase (229 aa).

The protein belongs to the L/F-transferase family.

It localises to the cytoplasm. It carries out the reaction N-terminal L-lysyl-[protein] + L-leucyl-tRNA(Leu) = N-terminal L-leucyl-L-lysyl-[protein] + tRNA(Leu) + H(+). It catalyses the reaction N-terminal L-arginyl-[protein] + L-leucyl-tRNA(Leu) = N-terminal L-leucyl-L-arginyl-[protein] + tRNA(Leu) + H(+). The enzyme catalyses L-phenylalanyl-tRNA(Phe) + an N-terminal L-alpha-aminoacyl-[protein] = an N-terminal L-phenylalanyl-L-alpha-aminoacyl-[protein] + tRNA(Phe). Its function is as follows. Functions in the N-end rule pathway of protein degradation where it conjugates Leu, Phe and, less efficiently, Met from aminoacyl-tRNAs to the N-termini of proteins containing an N-terminal arginine or lysine. The polypeptide is Leucyl/phenylalanyl-tRNA--protein transferase (Pseudomonas syringae pv. tomato (strain ATCC BAA-871 / DC3000)).